A 267-amino-acid chain; its full sequence is Glutamate 5-kinase (267 aa).

An ATP-binding site is contributed by Lys-18. Ser-58, Asp-145, and Asn-157 together coordinate substrate. ATP is bound by residues 177–178 and 219–225; these read SD and TGGMATK.

Belongs to the glutamate 5-kinase family.

It is found in the cytoplasm. The catalysed reaction is L-glutamate + ATP = L-glutamyl 5-phosphate + ADP. Its pathway is amino-acid biosynthesis; L-proline biosynthesis; L-glutamate 5-semialdehyde from L-glutamate: step 1/2. In terms of biological role, catalyzes the transfer of a phosphate group to glutamate to form L-glutamate 5-phosphate. This is Glutamate 5-kinase from Clostridium tetani (strain Massachusetts / E88).